A 473-amino-acid polypeptide reads, in one-letter code: Reticulon-4 receptor (473 aa).

The N-terminal stretch at 1–26 (MKRASSGGSRLLAWVLWLQAWRVATP) is a signal peptide. Intrachain disulfides connect cysteine 27–cysteine 33 and cysteine 31–cysteine 43. Residues 27-57 (CPGACVCYNEPKVTTSCPQQGLQAVPTGIPA) form the LRRNT domain. LRR repeat units follow at residues 58–79 (SSQR…SFQS), 82–103 (NLTI…AFTG), 106–128 (LLEQ…TFHG), 131–152 (HLHT…LFRG), 155–176 (ALQY…TFRD), 179–200 (NLTH…AFRG), 203–224 (SLDR…AFRD), and 227–248 (RLMT…VLMP). N-linked (GlcNAc...) asparagine glycosylation is present at asparagine 82. N-linked (GlcNAc...) asparagine glycosylation occurs at asparagine 179. The 52-residue stretch at 260 to 311 (NPWVCDCRARPLWAWLQKFRGSSSEVPCNLPQRLADRDLKRLAASDLEGCAV) folds into the LRRCT domain. Cystine bridges form between cysteine 264–cysteine 287, cysteine 266–cysteine 335, and cysteine 309–cysteine 336. The segment at 346-446 (VLEPGRPASA…GASGTGDAEG (101 aa)) is disordered. A glycan (N-linked (GlcNAc...) asparagine) is linked at asparagine 372. Residues 413 to 429 (PRRRPGCSRKNRTRSHC) are compositionally biased toward basic residues. Residues 434 to 445 (AGSGASGTGDAE) are compositionally biased toward gly residues. Residue serine 447 is the site of GPI-anchor amidated serine attachment. Residues 448-473 (GALPALACSLAPLGLALVLWTVLGPC) constitute a propeptide, removed in mature form.

This sequence belongs to the Nogo receptor family. As to quaternary structure, homodimer. Interacts with MAG. Interacts with RTN4. Interacts with NGFR. Interacts with LINGO1. Interacts with KIAA0319L. Interacts with OLFM1; this inhibits interaction with LINGO1 and NGFR. Interacts with OMG. N-glycosylated. O-glycosylated. Contains terminal sialic acid groups on its glycan chains. In terms of tissue distribution, detected in embryonic hippocampus neurons. Detected in brain (at protein level). Detected in neurons in the neocortex, in hippocampus, dorsal thalamus, cerebellum granule cell layer and the mitral cell layer in the olfactory bulb. Detected in brain, dorsal root ganglion and heart.

Its subcellular location is the cell membrane. It is found in the membrane raft. The protein localises to the cell projection. The protein resides in the dendrite. It localises to the axon. Its subcellular location is the perikaryon. In terms of biological role, receptor for RTN4, OMG and MAG. Functions as a receptor for the sialylated gangliosides GT1b and GM1. Besides, functions as a receptor for chondroitin sulfate proteoglycans. Can also bind heparin. Intracellular signaling cascades are triggered via the coreceptor NGFR. Signaling mediates activation of Rho and downstream reorganization of the actin cytoskeleton. Mediates axonal growth inhibition. Mediates axonal growth inhibition and plays a role in regulating axon regeneration and neuronal plasticity in the adult central nervous system. Plays a role in postnatal brain development. Required for normal axon migration across the brain midline and normal formation of the corpus callosum. Protects motoneurons against apoptosis; protection against apoptosis is probably mediated via interaction with MAG. Acts in conjunction with RTN4 and LINGO1 in regulating neuronal precursor cell motility during cortical development. Like other family members, plays a role in restricting the number dendritic spines and the number of synapses that are formed during brain development. This Mus musculus (Mouse) protein is Reticulon-4 receptor (Rtn4r).